Here is a 573-residue protein sequence, read N- to C-terminus: Multidrug and toxin extrusion protein 2 (573 aa).

Over 1–46 (MEPAEDSLGATIQPPELVRVPRGRSLRILLGLRGALSPDVRREAAA) the chain is Cytoplasmic. The chain crosses the membrane as a helical span at residues 47 to 67 (LVALAGPVFLAQLMIFLISIV). At 68 to 81 (SSIFCGHLGKVELD) the chain is on the extracellular side. Residues 82-102 (AVTLAVSVVNVTGISVGTGLA) traverse the membrane as a helical segment. The Cytoplasmic segment spans residues 103–122 (SACDTLMSQSFGGKNLKRVG). Residues 123-143 (VILQRGILILLLCCFPCWAIF) traverse the membrane as a helical segment. Topologically, residues 144 to 161 (LNTERLLLLLRQDPDVAR) are extracellular. The chain crosses the membrane as a helical span at residues 162–182 (LAQVYVMICIPALPAAFLFQL). Residues 183-196 (QTRYLQSQGIIMPQ) are Cytoplasmic-facing. Residues 197 to 217 (VIVGIAANVVNVGMNAFLLYA) form a helical membrane-spanning segment. Residues 218–225 (LDLGVVGS) lie on the Extracellular side of the membrane. The chain crosses the membrane as a helical span at residues 226–246 (AWANTTSQFFLSALLFLYVWW). Over 247-266 (KRIHIHTWGGWTRECFQEWS) the chain is Cytoplasmic. Residues 267–286 (SYTRLAIPSMFMVCIEWWTF) traverse the membrane as a helical segment. Residues 287-304 (EIGTFLAGLVNVTELGAQ) are Extracellular-facing. A helical transmembrane segment spans residues 305–325 (AVIYELASVAYMVPFGFGVAA). Residues 326-345 (SVRVGNALGAGNADQARCSC) are Cytoplasmic-facing. The chain crosses the membrane as a helical span at residues 346-366 (TTVLLCAGVCALLVGILLAAL). Topologically, residues 367-379 (KDVVAYIFTNDKD) are extracellular. A helical membrane pass occupies residues 380–400 (IISLVSQVMPIFAPFHLFDAL). Residues 401–415 (AGTCGGVLRGTGKQK) are Cytoplasmic-facing. Residues 416-436 (IGAVLNTIGYYGFGFPIGVSL) traverse the membrane as a helical segment. Residues 437–443 (MFAAKLG) lie on the Extracellular side of the membrane. The helical transmembrane segment at 444 to 464 (IIGLWAGLIVCVSFQAFSYLI) threads the bilayer. The Cytoplasmic segment spans residues 465–545 (YILRTNWSRV…VGEVLTGRQL (81 aa)). A helical membrane pass occupies residues 546–566 (VFYRGMALTVSVAVLIAGIVV). The Extracellular segment spans residues 567–573 (RVFNDRG).

This sequence belongs to the multi antimicrobial extrusion (MATE) (TC 2.A.66.1) family. As to expression, expressed in testis; especially in testicular Leydig cells.

Its subcellular location is the cell membrane. Its function is as follows. Multidrug efflux pump that functions as a H(+)/organic cation antiporter. May mediate testosterone efflux from the Leydig cells in the testes. This is Multidrug and toxin extrusion protein 2 (Slc47a2) from Mus musculus (Mouse).